The chain runs to 445 residues: Chromosome partition protein MukF (445 aa).

Positions Leu213–Ile241 are leucine-zipper.

Belongs to the MukF family. As to quaternary structure, interacts, and probably forms a ternary complex, with MukE and MukB via its C-terminal region. The complex formation is stimulated by calcium or magnesium. It is required for an interaction between MukE and MukB.

The protein localises to the cytoplasm. It localises to the nucleoid. Involved in chromosome condensation, segregation and cell cycle progression. May participate in facilitating chromosome segregation by condensation DNA from both sides of a centrally located replisome during cell division. Not required for mini-F plasmid partitioning. Probably acts via its interaction with MukB and MukE. Overexpression results in anucleate cells. It has a calcium binding activity. The chain is Chromosome partition protein MukF from Vibrio vulnificus (strain YJ016).